Consider the following 232-residue polypeptide: 5'-methylthioadenosine/S-adenosylhomocysteine nucleosidase (232 aa).

Glu-14 (proton acceptor) is an active-site residue. Substrate-binding positions include Gly-80, Val-154, and 175–176 (ME). Asp-199 acts as the Proton donor in catalysis.

It belongs to the PNP/UDP phosphorylase family. MtnN subfamily.

It carries out the reaction S-adenosyl-L-homocysteine + H2O = S-(5-deoxy-D-ribos-5-yl)-L-homocysteine + adenine. The catalysed reaction is S-methyl-5'-thioadenosine + H2O = 5-(methylsulfanyl)-D-ribose + adenine. The enzyme catalyses 5'-deoxyadenosine + H2O = 5-deoxy-D-ribose + adenine. It participates in amino-acid biosynthesis; L-methionine biosynthesis via salvage pathway; S-methyl-5-thio-alpha-D-ribose 1-phosphate from S-methyl-5'-thioadenosine (hydrolase route): step 1/2. Its function is as follows. Catalyzes the irreversible cleavage of the glycosidic bond in both 5'-methylthioadenosine (MTA) and S-adenosylhomocysteine (SAH/AdoHcy) to adenine and the corresponding thioribose, 5'-methylthioribose and S-ribosylhomocysteine, respectively. Also cleaves 5'-deoxyadenosine, a toxic by-product of radical S-adenosylmethionine (SAM) enzymes, into 5-deoxyribose and adenine. The polypeptide is 5'-methylthioadenosine/S-adenosylhomocysteine nucleosidase (Actinobacillus pleuropneumoniae serotype 5b (strain L20)).